Here is a 230-residue protein sequence, read N- to C-terminus: Ribosomal RNA small subunit methyltransferase Nep1 (230 aa).

Residues glycine 184, glycine 189, and 205–210 (IYNKPL) each bind S-adenosyl-L-methionine.

This sequence belongs to the class IV-like SAM-binding methyltransferase superfamily. RNA methyltransferase NEP1 family. Homodimer.

It catalyses the reaction a pseudouridine in rRNA + S-adenosyl-L-methionine = an N(1)-methylpseudouridine in rRNA + S-adenosyl-L-homocysteine + H(+). In terms of biological role, methyltransferase involved in ribosomal biogenesis. Specifically catalyzes the N1-methylation of the pseudouridine corresponding to position 914 in M.jannaschii 16S rRNA. The chain is Ribosomal RNA small subunit methyltransferase Nep1 from Staphylothermus marinus (strain ATCC 43588 / DSM 3639 / JCM 9404 / F1).